A 609-amino-acid chain; its full sequence is Probable translation initiation factor IF-2 (609 aa).

The tr-type G domain maps to 12 to 230 (LRQPIVAVLG…VLAGLAQRYM (219 aa)). The interval 21–28 (GHVDHGKT) is G1. 21-28 (GHVDHGKT) lines the GTP pocket. The tract at residues 46-50 (QITQH) is G2. The interval 86–89 (DTPG) is G3. GTP is bound by residues 86–90 (DTPGH) and 140–143 (NKID). A G4 region spans residues 140–143 (NKID). The interval 208 to 210 (SAK) is G5.

This sequence belongs to the TRAFAC class translation factor GTPase superfamily. Classic translation factor GTPase family. IF-2 subfamily.

Its function is as follows. Function in general translation initiation by promoting the binding of the formylmethionine-tRNA to ribosomes. Seems to function along with eIF-2. The polypeptide is Probable translation initiation factor IF-2 (Ignicoccus hospitalis (strain KIN4/I / DSM 18386 / JCM 14125)).